We begin with the raw amino-acid sequence, 245 residues long: MAPILELLPAVDVAGGQAVQLVQGKDGTGGRYGDPLNAALTWQNAGAEWIHLVDLDAAFGRGHNRELLASIVGKLDIKVELSGGIRDDESLNAALATGCHRVNIGTAALENPDWCAKVIAEHGDRVAIGLDVRGTTLAARGWTRDGGDLYETLERLEAAGCARYIVTDVNKDGTLKGPNLDLLRDVCSRTDKPVVASGGISSLDDLRALAALVPEGVEGAIMGTALYEGAFTLEEALATVREVAQ.

D12 (proton acceptor) is an active-site residue. D131 serves as the catalytic Proton donor.

The protein belongs to the HisA/HisF family.

The protein resides in the cytoplasm. The enzyme catalyses 1-(5-phospho-beta-D-ribosyl)-5-[(5-phospho-beta-D-ribosylamino)methylideneamino]imidazole-4-carboxamide = 5-[(5-phospho-1-deoxy-D-ribulos-1-ylimino)methylamino]-1-(5-phospho-beta-D-ribosyl)imidazole-4-carboxamide. It participates in amino-acid biosynthesis; L-histidine biosynthesis; L-histidine from 5-phospho-alpha-D-ribose 1-diphosphate: step 4/9. In Thermobifida fusca (strain YX), this protein is 1-(5-phosphoribosyl)-5-[(5-phosphoribosylamino)methylideneamino] imidazole-4-carboxamide isomerase.